Here is a 331-residue protein sequence, read N- to C-terminus: Glyceraldehyde-3-phosphate dehydrogenase, cytosolic (331 aa).

Residues 12–13, Asp-34, and Arg-78 contribute to the NAD(+) site; that span reads RI. Residues 149–151, Thr-180, 209–210, and Arg-232 contribute to the D-glyceraldehyde 3-phosphate site; these read SCT and TG. Residue Cys-150 is the Nucleophile of the active site. Residue Asn-314 participates in NAD(+) binding.

Belongs to the glyceraldehyde-3-phosphate dehydrogenase family. In terms of assembly, homotetramer.

It is found in the cytoplasm. The enzyme catalyses D-glyceraldehyde 3-phosphate + phosphate + NAD(+) = (2R)-3-phospho-glyceroyl phosphate + NADH + H(+). Its pathway is carbohydrate degradation; glycolysis; pyruvate from D-glyceraldehyde 3-phosphate: step 1/5. The sequence is that of Glyceraldehyde-3-phosphate dehydrogenase, cytosolic from Trypanosoma brucei brucei.